A 552-amino-acid polypeptide reads, in one-letter code: Phosphoglucomutase (552 aa).

S143 serves as the catalytic Phosphoserine intermediate. Positions 143, 295, 297, and 299 each coordinate Mg(2+).

Belongs to the phosphohexose mutase family. Mg(2+) is required as a cofactor.

It carries out the reaction alpha-D-glucose 1-phosphate = alpha-D-glucose 6-phosphate. It functions in the pathway glycolipid metabolism; diglucosyl-diacylglycerol biosynthesis. Functionally, catalyzes the interconversion between glucose-6-phosphate and alpha-glucose-1-phosphate. This is the first step in the biosynthesis of diglucosyl-diacylglycerol (Glc2-DAG), i.e. the predominant glycolipid found in the S.aureus membrane, which is also used as a membrane anchor for lipoteichoic acid (LTA). This Staphylococcus aureus (strain MSSA476) protein is Phosphoglucomutase (pgcA).